A 233-amino-acid chain; its full sequence is Large ribosomal subunit protein uL1 (233 aa).

Belongs to the universal ribosomal protein uL1 family. Part of the 50S ribosomal subunit.

Binds directly to 23S rRNA. The L1 stalk is quite mobile in the ribosome, and is involved in E site tRNA release. Its function is as follows. Protein L1 is also a translational repressor protein, it controls the translation of the L11 operon by binding to its mRNA. The sequence is that of Large ribosomal subunit protein uL1 from Brucella suis (strain ATCC 23445 / NCTC 10510).